The chain runs to 323 residues: MKETAISVLALLTLFLLEVVSANELSLPFHLPINETIGLEVFQGINNASPPSPSPLPYPQCGMKKGGGKCIKTGECCSIWGWCGTTNAYCSPGYCQKQCPGPYPEGRCGWQANGKSCPTGTGQCCSNGGWCGTTSDYCASKNCQSQCKLPSPPPPPPPPSPPPPSPPSPPPPSPPPPPPPSPPPPSPPPPSPSPPPPPASPPPPPPALPYPQCGIKKGGGKCIKTGECCSIWGWCGTTNAYCSPGYCQKQCPGPYPEGRCGWQANGKSCPTGTGHCCSNAGWCGTTSDYCAPVNCQAQCNTTTLTSPIKNRMRGIESFMLNVV.

Residues methionine 1–alanine 22 form the signal peptide. Proline 50, proline 51, proline 53, and proline 55 each carry 4-hydroxyproline. Proline 50, proline 51, proline 53, and proline 55 each carry an O-linked (Ara...) hydroxyproline glycan. 2 Chitin-binding type-1 domains span residues tyrosine 58 to glycine 101 and glutamate 105 to leucine 149. 8 cysteine pairs are disulfide-bonded: cysteine 61–cysteine 77, cysteine 70–cysteine 83, cysteine 76–cysteine 90, cysteine 95–cysteine 99, cysteine 108–cysteine 125, cysteine 117–cysteine 131, cysteine 124–cysteine 138, and cysteine 143–cysteine 147. Residues serine 78, tryptophan 80, tryptophan 82, and tyrosine 89 each coordinate chitin. The interval proline 150–tyrosine 210 is extensin-like. Serine 151 is a glycosylation site (O-linked (Gal) serine). Tandem repeats lie at residues serine 151–proline 159, serine 160–proline 164, serine 165–proline 167, serine 168–proline 172, serine 173–proline 180, serine 181–proline 185, serine 186–proline 190, serine 191–proline 192, serine 193–proline 198, and serine 200–proline 206. Residues serine 151–proline 206 form a 10 X approximate repeats of S-P-P-P-P region. Proline 152, proline 153, proline 154, proline 155, proline 156, proline 157, proline 158, and proline 159 each carry 4-hydroxyproline. 8 O-linked (Ara...) hydroxyproline glycosylation sites follow: proline 152, proline 153, proline 154, proline 155, proline 156, proline 157, proline 158, and proline 159. The disordered stretch occupies residues proline 154–proline 203. Serine 160 carries O-linked (Gal) serine glycosylation. 4-hydroxyproline occurs at positions 161, 162, 163, and 164. Residues proline 161, proline 162, proline 163, and proline 164 are each glycosylated (O-linked (Ara...) hydroxyproline). Serine 165 is a glycosylation site (O-linked (Gal) serine). A 4-hydroxyproline mark is found at proline 166 and proline 167. O-linked (Ara...) hydroxyproline glycosylation is found at proline 166 and proline 167. Residue serine 168 is glycosylated (O-linked (Gal) serine). 4-hydroxyproline is present on residues proline 169, proline 170, proline 171, and proline 172. O-linked (Ara...) hydroxyproline glycosylation is found at proline 169, proline 170, proline 171, and proline 172. Serine 173 carries O-linked (Gal) serine glycosylation. 4-hydroxyproline occurs at positions 174, 175, 176, 177, 178, 179, and 180. O-linked (Ara...) hydroxyproline glycosylation is found at proline 174, proline 175, proline 176, proline 177, proline 178, proline 179, and proline 180. An O-linked (Gal) serine glycan is attached at serine 181. Residues proline 182, proline 183, proline 184, and proline 185 each carry the 4-hydroxyproline modification. Residues proline 182, proline 183, proline 184, and proline 185 are each glycosylated (O-linked (Ara...) hydroxyproline). Serine 186 carries an O-linked (Gal) serine glycan. Residues proline 187, proline 188, proline 189, and proline 190 each carry the 4-hydroxyproline modification. O-linked (Ara...) hydroxyproline glycosylation is found at proline 187, proline 188, proline 189, and proline 190. Serine 191 is a glycosylation site (O-linked (Gal) serine). Proline 192 is subject to 4-hydroxyproline. O-linked (Ara...) hydroxyproline glycosylation is present at proline 192. The O-linked (Gal) serine glycan is linked to serine 193. A 4-hydroxyproline mark is found at proline 194, proline 195, proline 196, proline 197, and proline 198. 5 O-linked (Ara...) hydroxyproline glycosylation sites follow: proline 194, proline 195, proline 196, proline 197, and proline 198. Residue serine 200 is glycosylated (O-linked (Gal) serine). 7 positions are modified to 4-hydroxyproline: proline 201, proline 202, proline 203, proline 204, proline 205, proline 206, and proline 209. O-linked (Ara...) hydroxyproline glycosylation is found at proline 201, proline 202, proline 203, proline 204, proline 205, proline 206, and proline 209. Chitin-binding type-1 domains follow at residues tyrosine 210 to glycine 253 and glutamate 257 to threonine 301. Disulfide bonds link cysteine 213–cysteine 229, cysteine 222–cysteine 235, cysteine 228–cysteine 242, cysteine 247–cysteine 251, cysteine 260–cysteine 277, cysteine 269–cysteine 283, cysteine 276–cysteine 290, and cysteine 295–cysteine 299. Chitin is bound by residues serine 230, tryptophan 232, tryptophan 234, and tyrosine 241.

The protein in the central section; belongs to the extensin family. In terms of assembly, homodimer. Post-translationally, heavily glycosylated with beta-arabinose on hydroxyprolines and with alpha-galactose on serines of the extensin-like domain. As no other sugars could be detected in the native lectin, it is unlikely that the three putative N-glycosylation sites are actually glycosylated. The N-terminus is blocked. The N-terminal sequences proposed in PubMed:9022287 and PubMed:11056399 originate probably from truncated proteins.

Its function is as follows. This protein might function as a defense against chitin containing pathogens. Binds to several branched or linear N-acetyllactosamine-containing glycosphingolipids and also to lactosylceramide with sphingosine and non-hydroxy fatty acids. The polypeptide is Chitin-binding lectin 1 (Solanum tuberosum (Potato)).